The following is a 271-amino-acid chain: 3-methyl-2-oxobutanoate hydroxymethyltransferase (271 aa).

Positions 51 and 90 each coordinate Mg(2+). 3-methyl-2-oxobutanoate contacts are provided by residues 51 to 52, Asp-90, and Lys-118; that span reads DS. A Mg(2+)-binding site is contributed by Glu-120. Catalysis depends on Glu-186, which acts as the Proton acceptor.

Belongs to the PanB family. In terms of assembly, homodecamer; pentamer of dimers. The cofactor is Mg(2+).

It is found in the cytoplasm. The enzyme catalyses 3-methyl-2-oxobutanoate + (6R)-5,10-methylene-5,6,7,8-tetrahydrofolate + H2O = 2-dehydropantoate + (6S)-5,6,7,8-tetrahydrofolate. It functions in the pathway cofactor biosynthesis; (R)-pantothenate biosynthesis; (R)-pantoate from 3-methyl-2-oxobutanoate: step 1/2. In terms of biological role, catalyzes the reversible reaction in which hydroxymethyl group from 5,10-methylenetetrahydrofolate is transferred onto alpha-ketoisovalerate to form ketopantoate. The protein is 3-methyl-2-oxobutanoate hydroxymethyltransferase of Xanthomonas campestris pv. campestris (strain 8004).